The following is a 279-amino-acid chain: Tryptophan synthase alpha chain (279 aa).

Residues Glu-50 and Asp-61 each act as proton acceptor in the active site.

It belongs to the TrpA family. As to quaternary structure, tetramer of two alpha and two beta chains.

It catalyses the reaction (1S,2R)-1-C-(indol-3-yl)glycerol 3-phosphate + L-serine = D-glyceraldehyde 3-phosphate + L-tryptophan + H2O. Its pathway is amino-acid biosynthesis; L-tryptophan biosynthesis; L-tryptophan from chorismate: step 5/5. The alpha subunit is responsible for the aldol cleavage of indoleglycerol phosphate to indole and glyceraldehyde 3-phosphate. The sequence is that of Tryptophan synthase alpha chain from Rhizobium etli (strain ATCC 51251 / DSM 11541 / JCM 21823 / NBRC 15573 / CFN 42).